Consider the following 647-residue polypeptide: Threonine--tRNA ligase (647 aa).

Positions 1–61 constitute a TGS domain; it reads MIKITFPDGA…EEDGSIEIVT (61 aa). The interval 240-538 is catalytic; that stretch reads DHRKLGKELD…LIETYKGAFP (299 aa). Zn(2+) is bound by residues C334, H385, and H515.

This sequence belongs to the class-II aminoacyl-tRNA synthetase family. In terms of assembly, homodimer. Requires Zn(2+) as cofactor.

It is found in the cytoplasm. It catalyses the reaction tRNA(Thr) + L-threonine + ATP = L-threonyl-tRNA(Thr) + AMP + diphosphate + H(+). In terms of biological role, catalyzes the attachment of threonine to tRNA(Thr) in a two-step reaction: L-threonine is first activated by ATP to form Thr-AMP and then transferred to the acceptor end of tRNA(Thr). Also edits incorrectly charged L-seryl-tRNA(Thr). The sequence is that of Threonine--tRNA ligase from Streptococcus pyogenes serotype M49 (strain NZ131).